A 271-amino-acid polypeptide reads, in one-letter code: Thiosulfate sulfurtransferase (271 aa).

Rhodanese domains follow at residues 21–129 (GAPE…ALDR) and 159–270 (GAAD…TPVE). Cysteine 230 acts as the Cysteine persulfide intermediate in catalysis.

The protein resides in the cytoplasm. It catalyses the reaction thiosulfate + hydrogen cyanide = thiocyanate + sulfite + 2 H(+). In terms of biological role, catalyzes the sulfur transfer reaction from thiosulfate to cyanide, thus converting cyanide to the less toxic thiocyanate. Contributes to P.aeruginosa survival under cyanogenic conditions, and thus provides the bacterium with a defense mechanism against endogenous cyanide toxicity. Is the main cytoplasmic rhodanese in P.aeruginosa, accounting for 90% of total rhodanese activity. This chain is Thiosulfate sulfurtransferase, found in Pseudomonas aeruginosa (strain ATCC 15692 / DSM 22644 / CIP 104116 / JCM 14847 / LMG 12228 / 1C / PRS 101 / PAO1).